A 413-amino-acid chain; its full sequence is Probable elongation factor 1-gamma 2 (413 aa).

One can recognise a GST N-terminal domain in the interval Met-1–Ser-82. The GST C-terminal domain occupies Ser-87–Val-215. Positions Lys-207 to Leu-260 are disordered. The region spanning Ala-253–Lys-413 is the EF-1-gamma C-terminal domain.

EF-1 is composed of four subunits: alpha, beta, delta, and gamma.

Functionally, probably plays a role in anchoring the complex to other cellular components. This Arabidopsis thaliana (Mouse-ear cress) protein is Probable elongation factor 1-gamma 2.